A 465-amino-acid chain; its full sequence is GDNF family receptor alpha-1 (465 aa).

Positions 1–24 (MFLATLYFALPLLDLLLSAEVSGG) are cleaved as a signal peptide. Tandem repeats lie at residues 25-113 (DRLD…LQGN), 150-238 (KGNN…YEER), and 239-342 (EKPN…KNAI). Cys36 and Cys42 are oxidised to a cystine. N-linked (GlcNAc...) asparagine glycosylation occurs at Asn59. Intrachain disulfides connect Cys154/Cys214, Cys161/Cys167, Cys178/Cys192, Cys187/Cys233, Cys216/Cys221, Cys243/Cys313, Cys250/Cys256, Cys267/Cys285, Cys277/Cys337, and Cys315/Cys325. Asn347 and Asn406 each carry an N-linked (GlcNAc...) asparagine glycan. Ser429 carries GPI-anchor amidated serine lipidation. A propeptide spans 430–465 (HITTKSMAAPPSCGLSPLLVLVVTALSTLLSLTETS) (removed in mature form).

It belongs to the GDNFR family. As to quaternary structure, interacts with GDNF ligand and RET: forms a 2:2:2 ternary complex composed of GDNF ligand, GFRA1 and RET receptor. Interacts with SORL1, either alone or in complex with GDNF. Interaction between SORL1 and GFRA1 leads to GFRA1 internalization, but not degradation.

The protein resides in the cell membrane. The protein localises to the golgi apparatus. It localises to the trans-Golgi network. Its subcellular location is the endosome. It is found in the multivesicular body. In terms of biological role, coreceptor for GDNF, a neurotrophic factor that enhances survival and morphological differentiation of dopaminergic neurons and increases their high-affinity dopamine uptake. GDNF-binding leads to autophosphorylation and activation of the RET receptor. The polypeptide is GDNF family receptor alpha-1 (GFRA1) (Homo sapiens (Human)).